Here is a 252-residue protein sequence, read N- to C-terminus: Thiamine thiazole synthase (252 aa).

NAD(+) is bound by residues serine 35, 54 to 55, glycine 62, valine 126, and 152 to 154; these read EK and HVD. Positions 154 and 169 each coordinate Fe cation. Position 217 (methionine 217) interacts with NAD(+). Arginine 227 is a binding site for glycine.

Belongs to the THI4 family. As to quaternary structure, homooctamer; tetramer of dimers. Requires Fe(2+) as cofactor.

The catalysed reaction is hydrogen sulfide + glycine + NAD(+) = ADP-5-ethyl-4-methylthiazole-2-carboxylate + nicotinamide + 3 H2O + H(+). It participates in cofactor biosynthesis; thiamine diphosphate biosynthesis. Functionally, involved in the biosynthesis of the thiazole moiety of thiamine. Catalyzes the conversion of NAD and glycine to adenosine diphosphate 5-(2-hydroxyethyl)-4-methylthiazole-2-carboxylate (ADT), an adenylated thiazole intermediate, using free sulfide as a source of sulfur. The chain is Thiamine thiazole synthase from Pyrococcus furiosus (strain ATCC 43587 / DSM 3638 / JCM 8422 / Vc1).